The sequence spans 102 residues: Small ribosomal subunit protein uS10 (102 aa).

It belongs to the universal ribosomal protein uS10 family. As to quaternary structure, part of the 30S ribosomal subunit.

Functionally, involved in the binding of tRNA to the ribosomes. This chain is Small ribosomal subunit protein uS10, found in Streptococcus uberis (strain ATCC BAA-854 / 0140J).